The sequence spans 717 residues: Radial spoke head protein 6 homolog A (717 aa).

Disordered stretches follow at residues M1–Q65, S503–N523, T563–G588, and G672–D717. Composition is skewed to acidic residues over residues S503–G513, E564–Q585, and T700–D717.

The protein belongs to the flagellar radial spoke RSP4/6 family. Component of the axonemal radial spoke 1 (RS1) and 2 (RS2) complexes, at least composed of spoke head proteins RSPH1, RSPH3, RSPH9 and the cilia-specific component RSPH4A or sperm-specific component RSPH6A, spoke stalk proteins RSPH14, DNAJB13, DYDC1, ROPN1L and NME5, and the RS1 complex-specific anchor protein IQUB. Interacts with RSPH1. Interacts with RSPH3B. Interacts with RSPH4A. Interacts with RSPH9. Interacts with RSPH10B. Phosphorylated by PKA. Phosphorylation increases in capacitated sperm.

It localises to the cytoplasm. It is found in the cytoskeleton. The protein resides in the flagellum axoneme. In terms of biological role, functions as part of radial spoke complexes in the axoneme of sperm flagella that play an important part in motility. The triple radial spokes (RS1, RS2 and RS3) are required to modulate beating of the sperm flagellum. This Homo sapiens (Human) protein is Radial spoke head protein 6 homolog A.